The primary structure comprises 380 residues: Probable acyl-CoA dehydrogenase YngJ (380 aa).

FAD-binding positions include 123–132, 156–158, Arg269, and 337–341; these read FGLTEPNAGS, WIT, and QIHGG. Glu364 serves as the catalytic Proton acceptor. An FAD-binding site is contributed by 366–368; the sequence is TSE.

This sequence belongs to the acyl-CoA dehydrogenase family. FAD is required as a cofactor.

The enzyme catalyses a 2,3-saturated acyl-CoA + A = a 2,3-dehydroacyl-CoA + AH2. This chain is Probable acyl-CoA dehydrogenase YngJ (yngJ), found in Bacillus subtilis (strain 168).